The following is a 373-amino-acid chain: Lipoyl amidotransferase LIPT1, mitochondrial (373 aa).

Residues 1 to 25 (MLIPFSMKNCFQLLCNLKVPAAGFK) constitute a mitochondrion transit peptide. A BPL/LPL catalytic domain is found at 57-243 (LEGKPVLFLW…EYATSHQIDN (187 aa)). Residues tyrosine 107, arginine 151, lysine 161, threonine 179, threonine 208, and alanine 210 each contribute to the (R)-lipoyl-5'-AMP site.

This sequence belongs to the LplA family.

The protein localises to the mitochondrion. It catalyses the reaction N(6)-[(R)-lipoyl]-L-lysyl-[glycine-cleavage complex H protein] + L-lysyl-[lipoyl-carrier protein] = L-lysyl-[glycine-cleavage complex H protein] + N(6)-[(R)-lipoyl]-L-lysyl-[lipoyl-carrier protein]. It carries out the reaction (R)-lipoyl-5'-AMP + L-lysyl-[lipoyl-carrier protein] = N(6)-[(R)-lipoyl]-L-lysyl-[lipoyl-carrier protein] + AMP + 2 H(+). Its pathway is protein modification; protein lipoylation via exogenous pathway; protein N(6)-(lipoyl)lysine from lipoate: step 2/2. With respect to regulation, inhibited by lipoyl-AMP analogs including hexanoyl-, octanoyl- and decanoyl-AMP. Its function is as follows. Lipoyl amidotransferase that catalyzes the transfer of lipoyl moieties from lipoyl-protein H of the glycine cleavage system (lipoyl-GCSH) to E2 subunits of the pyruvate dehydrogenase complex (PDCE2). Unable to catalyze the transfer of octanoyl from octanoyl-GCSH to PDCE2. In vitro, it is also able to catalyze the transfer of the lipoyl group from lipoyl-AMP to the specific lysine residue of lipoyl domains of lipoate-dependent enzymes but this reaction may not be physiologically relevant. In Bos taurus (Bovine), this protein is Lipoyl amidotransferase LIPT1, mitochondrial (LIPT1).